The primary structure comprises 167 residues: Phosphopantetheine adenylyltransferase (167 aa).

Thr-9 provides a ligand contact to substrate. Residues 9–10 (TF) and His-17 each bind ATP. Residues Lys-41, Leu-73, and Arg-87 each contribute to the substrate site. Residues 88-90 (GLR), Glu-98, and 123-129 (YQFISGT) each bind ATP.

Belongs to the bacterial CoaD family. In terms of assembly, homohexamer. Mg(2+) is required as a cofactor.

Its subcellular location is the cytoplasm. The catalysed reaction is (R)-4'-phosphopantetheine + ATP + H(+) = 3'-dephospho-CoA + diphosphate. It functions in the pathway cofactor biosynthesis; coenzyme A biosynthesis; CoA from (R)-pantothenate: step 4/5. Its function is as follows. Reversibly transfers an adenylyl group from ATP to 4'-phosphopantetheine, yielding dephospho-CoA (dPCoA) and pyrophosphate. The protein is Phosphopantetheine adenylyltransferase of Ralstonia pickettii (strain 12J).